Here is a 200-residue protein sequence, read N- to C-terminus: Dephospho-CoA kinase (200 aa).

The DPCK domain maps to 3-200; sequence RIGLTGGIGS…LIAEILSRVN (198 aa). 11-16 lines the ATP pocket; it reads GSGKST.

It belongs to the CoaE family.

Its subcellular location is the cytoplasm. It catalyses the reaction 3'-dephospho-CoA + ATP = ADP + CoA + H(+). Its pathway is cofactor biosynthesis; coenzyme A biosynthesis; CoA from (R)-pantothenate: step 5/5. Functionally, catalyzes the phosphorylation of the 3'-hydroxyl group of dephosphocoenzyme A to form coenzyme A. The protein is Dephospho-CoA kinase of Corynebacterium glutamicum (strain ATCC 13032 / DSM 20300 / JCM 1318 / BCRC 11384 / CCUG 27702 / LMG 3730 / NBRC 12168 / NCIMB 10025 / NRRL B-2784 / 534).